A 575-amino-acid polypeptide reads, in one-letter code: Phosphoenolpyruvate-protein phosphotransferase (575 aa).

His189 functions as the Tele-phosphohistidine intermediate in the catalytic mechanism. Positions 296 and 332 each coordinate phosphoenolpyruvate. Glu431 and Asp455 together coordinate Mg(2+). Phosphoenolpyruvate-binding positions include 454-455 (ND) and Arg465. Cys502 acts as the Proton donor in catalysis.

It belongs to the PEP-utilizing enzyme family. As to quaternary structure, homodimer. Mg(2+) is required as a cofactor.

It is found in the cytoplasm. It carries out the reaction L-histidyl-[protein] + phosphoenolpyruvate = N(pros)-phospho-L-histidyl-[protein] + pyruvate. General (non sugar-specific) component of the phosphoenolpyruvate-dependent sugar phosphotransferase system (sugar PTS). This major carbohydrate active-transport system catalyzes the phosphorylation of incoming sugar substrates concomitantly with their translocation across the cell membrane. Enzyme I transfers the phosphoryl group from phosphoenolpyruvate (PEP) to the phosphoryl carrier protein (HPr). The chain is Phosphoenolpyruvate-protein phosphotransferase (ptsI) from Haemophilus influenzae (strain ATCC 51907 / DSM 11121 / KW20 / Rd).